Here is a 289-residue protein sequence, read N- to C-terminus: Bifunctional aminodeoxychorismate lyase / D-amino acid transaminase (289 aa).

Arg50 is a binding site for pyridoxal 5'-phosphate. Lys149 is modified (N6-(pyridoxal phosphate)lysine). Pyridoxal 5'-phosphate contacts are provided by Tyr153, Thr216, and Thr217. Ser252 contacts 2-oxoglutarate. Ser253 lines the pyridoxal 5'-phosphate pocket. Met254 and Thr255 together coordinate 2-oxoglutarate.

Belongs to the class-IV pyridoxal-phosphate-dependent aminotransferase family. Homodimer. Pyridoxal 5'-phosphate serves as cofactor.

It catalyses the reaction 4-amino-4-deoxychorismate = 4-aminobenzoate + pyruvate + H(+). It carries out the reaction D-alanine + 2-oxoglutarate = D-glutamate + pyruvate. Its pathway is cofactor biosynthesis; tetrahydrofolate biosynthesis; 4-aminobenzoate from chorismate: step 2/2. It participates in cell wall biogenesis; peptidoglycan biosynthesis. Functionally, bifunctional enzyme that catalyzes two enzymatic reactions in biochemically unrelated pathways: acts as an aminodeoxychorismate (ADC) lyase (ADCL) in folate biosynthesis, converting 4-amino-4-deoxychorismate (ADC) to 4-aminobenzoate (PABA), and as a D-amino acid transaminase (DAAT) in peptidoglycan (PG) biosynthesis. DAAT activity is strictly restricted to D-alanine and D-glutamate. May function as a metabolic toggle that alternates between ADCL and DAAT activity, prioritizing the former over the latter in response to substrate accumulation. Bifunctionality of this enzyme provides a failsafe mechanism for a metabolic coupling between nucleic acid and cell wall biosynthesis that appears to ensure prioritization of PABA production over D-alanine/D-glutamate biosynthesis. The sequence is that of Bifunctional aminodeoxychorismate lyase / D-amino acid transaminase from Mycobacterium tuberculosis (strain ATCC 25618 / H37Rv).